We begin with the raw amino-acid sequence, 115 residues long: Protein VCF2 (115 aa).

Residues 1 to 12 (MGGCPVRKRRRN) are compositionally biased toward basic residues. The segment at 1-70 (MGGCPVRKRR…GPEGNLNQIV (70 aa)) is disordered. Residues 33–44 (FQDSQDTEFSWS) are compositionally biased toward polar residues.

The protein belongs to the VCF family.

This chain is Protein VCF2, found in Homo sapiens (Human).